The sequence spans 351 residues: Terpene cyclase sdgD (351 aa).

Helical transmembrane passes span 7 to 27 (INFI…TILI), 62 to 82 (TGVP…WPVI), 89 to 109 (LSLL…LLLL), 126 to 146 (WVGL…YCAI), 160 to 180 (IPHV…LVAL), 193 to 213 (VVVA…FMAS), 229 to 249 (IYIF…LASL), 281 to 301 (FLQW…VAVY), and 316 to 336 (LEVC…LLIW).

The protein belongs to the membrane-bound ascI terpene cyclase family.

It is found in the membrane. It functions in the pathway secondary metabolite biosynthesis. Functionally, epoxide hydrolase; part of the gene cluster that mediates the biosynthesis of the polyenes aspernidgulenes. The carbon backbone of aspernidgulenes is synthesized by the HR-PKS sdgA, which accepts acetyl-CoA as the starter unit and performs malonyl-CoA extensions as well as regioselective methylation and reduction. The resulting nonaketide offloads the HR-PKS by intramolecular lactonization to yield the 5,6-dihydro-alpha-pyrone-containing hexaenoic acids preaspernidgulene A1 and A2. The FAD-dependent monooxygenase sdgC then installs the first epoxide on the penultimate double bond. Subsequently, the FAD-dependent monooxygenase sdgF presumably generates a ketone intermediate through Meinwald rearrangement involving a hydride shift. Next, sdgC introduces another epoxide on the last olefin of the ketone intermediate after E/Z isomerization. The epoxide hydrolase sdgD then catalyzes stereospecific cyclization of the 5,6-dihydro-alpha-pyrone and opening of the epoxide ring to form an oxygenated trimethylcyclopentanone and an oxabicyclo[2.2.1]heptane unit. Finally, the bicyclic unit undergoes hydrolytic cleavage, either spontaneously or catalyzed by sdgD, to assemble the dimethyl-gamma-lactone moiety in aspernidgulene A1. The sequence is that of Terpene cyclase sdgD from Emericella nidulans (strain FGSC A4 / ATCC 38163 / CBS 112.46 / NRRL 194 / M139) (Aspergillus nidulans).